A 406-amino-acid chain; its full sequence is Bifunctional enzyme IspD/IspF (406 aa).

Residues M1–T247 form a 2-C-methyl-D-erythritol 4-phosphate cytidylyltransferase region. Residues F248–L406 are 2-C-methyl-D-erythritol 2,4-cyclodiphosphate synthase. The a divalent metal cation site is built by D254 and H256. Residues D254 to H256 and H280 to S281 each bind 4-CDP-2-C-methyl-D-erythritol 2-phosphate. An a divalent metal cation-binding site is contributed by H288. 4-CDP-2-C-methyl-D-erythritol 2-phosphate contacts are provided by residues D302–G304, F307–D311, T378–E381, F385, and K388.

It in the N-terminal section; belongs to the IspD/TarI cytidylyltransferase family. IspD subfamily. This sequence in the C-terminal section; belongs to the IspF family. A divalent metal cation is required as a cofactor.

The enzyme catalyses 2-C-methyl-D-erythritol 4-phosphate + CTP + H(+) = 4-CDP-2-C-methyl-D-erythritol + diphosphate. It carries out the reaction 4-CDP-2-C-methyl-D-erythritol 2-phosphate = 2-C-methyl-D-erythritol 2,4-cyclic diphosphate + CMP. The protein operates within isoprenoid biosynthesis; isopentenyl diphosphate biosynthesis via DXP pathway; isopentenyl diphosphate from 1-deoxy-D-xylulose 5-phosphate: step 2/6. It participates in isoprenoid biosynthesis; isopentenyl diphosphate biosynthesis via DXP pathway; isopentenyl diphosphate from 1-deoxy-D-xylulose 5-phosphate: step 4/6. Functionally, bifunctional enzyme that catalyzes the formation of 4-diphosphocytidyl-2-C-methyl-D-erythritol from CTP and 2-C-methyl-D-erythritol 4-phosphate (MEP) (IspD), and catalyzes the conversion of 4-diphosphocytidyl-2-C-methyl-D-erythritol 2-phosphate (CDP-ME2P) to 2-C-methyl-D-erythritol 2,4-cyclodiphosphate (ME-CPP) with a corresponding release of cytidine 5-monophosphate (CMP) (IspF). This Helicobacter pylori (strain ATCC 700392 / 26695) (Campylobacter pylori) protein is Bifunctional enzyme IspD/IspF.